The following is a 377-amino-acid chain: DNA methyltransferase CcrM (377 aa).

Residues 271 to 373 (LGKAELTVMT…LRKIIREQMA (103 aa)) enclose the RAMA domain.

It belongs to the N(4)/N(6)-methyltransferase family.

It carries out the reaction a 2'-deoxyadenosine in DNA + S-adenosyl-L-methionine = an N(6)-methyl-2'-deoxyadenosine in DNA + S-adenosyl-L-homocysteine + H(+). A beta subtype methylase that recognizes the double-stranded sequence 5'-GANTC-3' and methylates A-2 on both strands. CcrM-mediated methylation has important cellular functions. Contributes to the accurate cell-cycle control of DNA replication and cellular morphology. The chain is DNA methyltransferase CcrM (ccrM) from Brucella canis (strain ATCC 23365 / NCTC 10854 / RM-666).